A 597-amino-acid chain; its full sequence is Vacuolar protein sorting-associated protein 33A (597 aa).

It belongs to the STXBP/unc-18/SEC1 family. As to quaternary structure, core component of at least two putative endosomal tethering complexes, the homotypic fusion and vacuole protein sorting (HOPS) complex and the class C core vacuole/endosome tethering (CORVET) complex. Their common core is composed of the class C Vps proteins VPS11, VPS16, VPS18 and VPS33A, which in HOPS further associates with VPS39 and VPS41 and in CORVET with VPS8 and TGFBRAP1. Interacts with RAB5C, UVRAG, STX17, MON1A and MON1B. Associates with adaptor protein complex 3 (AP-3) and clathrin. Interacts with PLEKHM1. Ubiquitous.

It localises to the cytoplasmic vesicle. The protein localises to the late endosome membrane. The protein resides in the lysosome membrane. It is found in the early endosome. Its subcellular location is the autophagosome. It localises to the clathrin-coated vesicle. Its function is as follows. Plays a role in vesicle-mediated protein trafficking to lysosomal compartments including the endocytic membrane transport and autophagic pathways. Believed to act as a core component of the putative HOPS and CORVET endosomal tethering complexes which are proposed to be involved in the Rab5-to-Rab7 endosome conversion probably implicating MON1A/B, and via binding SNAREs and SNARE complexes to mediate tethering and docking events during SNARE-mediated membrane fusion. The HOPS complex is proposed to be recruited to Rab7 on the late endosomal membrane and to regulate late endocytic, phagocytic and autophagic traffic towards lysosomes. The CORVET complex is proposed to function as a Rab5 effector to mediate early endosome fusion probably in specific endosome subpopulations. Required for fusion of endosomes and autophagosomes with lysosomes; the function is dependent on its association with VPS16 but not VIPAS39. The function in autophagosome-lysosome fusion implicates STX17 but not UVRAG. The polypeptide is Vacuolar protein sorting-associated protein 33A (Vps33a) (Rattus norvegicus (Rat)).